The chain runs to 420 residues: Phosphoribosylamine--glycine ligase (420 aa).

In terms of domain architecture, ATP-grasp spans 108 to 314 (KQFMEKYAIP…FAALIDALLH (207 aa)). Position 134–195 (134–195 (LNERGVPIVI…EDFLAGEEFS (62 aa))) interacts with ATP. Mg(2+) is bound by residues glutamate 284 and asparagine 286.

The protein belongs to the GARS family. Requires Mg(2+) as cofactor. Mn(2+) is required as a cofactor.

It carries out the reaction 5-phospho-beta-D-ribosylamine + glycine + ATP = N(1)-(5-phospho-beta-D-ribosyl)glycinamide + ADP + phosphate + H(+). Its pathway is purine metabolism; IMP biosynthesis via de novo pathway; N(1)-(5-phospho-D-ribosyl)glycinamide from 5-phospho-alpha-D-ribose 1-diphosphate: step 2/2. This chain is Phosphoribosylamine--glycine ligase, found in Listeria monocytogenes serovar 1/2a (strain ATCC BAA-679 / EGD-e).